The primary structure comprises 148 residues: Snaclec alboaggregin-D subunit beta (148 aa).

Positions 1–23 are cleaved as a signal peptide; sequence MGRFISVSFGLLVVFLSLSGAGA. Residues C27 and C38 are joined by a disulfide bond. Residues 34 to 145 form the C-type lectin domain; the sequence is YDLYCYKVFK…CNSTYSFVCK (112 aa). The N-linked (GlcNAc...) asparagine glycan is linked to N47. 2 disulfides stabilise this stretch: C55–C144 and C121–C136. N137 carries N-linked (GlcNAc...) asparagine glycosylation.

As to quaternary structure, tetramer of heterodimers of alpha and beta subunits (alphabeta)(4); disulfide-linked. Expressed by the venom gland.

It is found in the secreted. In terms of biological role, snaclec that induces human platelet aggregation in the absence of any cofactor with the EC(50) of 0.25 nM and causes tyrosine phosphorylation in human platelets. Antibodies against either platelet GPIbalpha (GP1BA) or GPVI (GP6) inhibit alboaggregin D-induced platelet aggregation. Only the combination of these two antibodies completely inhibit aggregation, suggesting that it acts through both GPIbalpha (GP1BA) and GPVI (GP6). The polypeptide is Snaclec alboaggregin-D subunit beta (Trimeresurus albolabris (White-lipped pit viper)).